Here is a 317-residue protein sequence, read N- to C-terminus: ATP synthase gamma chain (317 aa).

The protein belongs to the ATPase gamma chain family. In terms of assembly, F-type ATPases have 2 components, CF(1) - the catalytic core - and CF(0) - the membrane proton channel. CF(1) has five subunits: alpha(3), beta(3), gamma(1), delta(1), epsilon(1). CF(0) has three main subunits: a, b and c.

Its subcellular location is the cellular thylakoid membrane. Produces ATP from ADP in the presence of a proton gradient across the membrane. The gamma chain is believed to be important in regulating ATPase activity and the flow of protons through the CF(0) complex. The protein is ATP synthase gamma chain of Synechococcus sp. (strain CC9902).